A 152-amino-acid polypeptide reads, in one-letter code: Large ribosomal subunit protein bL9 (152 aa).

Belongs to the bacterial ribosomal protein bL9 family.

Its function is as follows. Binds to the 23S rRNA. This chain is Large ribosomal subunit protein bL9, found in Synechococcus elongatus (strain ATCC 33912 / PCC 7942 / FACHB-805) (Anacystis nidulans R2).